A 474-amino-acid chain; its full sequence is Cell division protein FtsP (474 aa).

The tat-type signal signal peptide spans 1–27; that stretch reads MSLSRRQFIQAAGLALGAGSLPLRAQA. Residues 229-288 form the Plastocyanin-like domain; that stretch reads WVRLRLLNASNARRYTLQLSDGRPLYVVASDQGFLPAPVAVQQLSLAPGERREVVIDMSQ.

Belongs to the FtsP family. Predicted to be exported by the Tat system. The position of the signal peptide cleavage has not been experimentally proven.

Its subcellular location is the periplasm. In terms of biological role, cell division protein that is required for growth during stress conditions. May be involved in protecting or stabilizing the divisomal assembly under conditions of stress. This chain is Cell division protein FtsP, found in Yersinia pestis.